The following is a 451-amino-acid chain: MKTVTDYQNKNILVLGIAKSGYAAANLLKSLGANVIVNDGKPLANNELAAELQAKGMDVVCGGHPLELLERNIALVVKNPGIPYSNPLLVAATEKQIPIITEIELAYRISEAPFIGITGSNGKTTTTMLTFEMLKEGEKHPAIAGNIGTVACEVAQAAKANEVLVTELSSFQLMGVETFQPKIAAFLNLFEAHLDYHGTKKEYGLAKANIFKNQTAADYSVINADDADVMELSANSKGQKILFSTTKEIEDGACIKENALYFKGEKVVEIKDIVLPGKHNLENILAAMSIAKLLGVANEAIVAVLKRFTGVKHRLEYVTTIHNRKFYNDSKATNILATEKALSAFTSPVILLAGGLDRGNEFDDLIPYFEQHVKAIVTYGQTAPKLVHAAEKAGLAIIEAVHHLEEAVERAYAHSADGDVILLSPACASWDQFKTFEERGDIFIQAVHKLI.

Residue 119 to 125 (GSNGKTT) participates in ATP binding.

It belongs to the MurCDEF family.

The protein localises to the cytoplasm. It carries out the reaction UDP-N-acetyl-alpha-D-muramoyl-L-alanine + D-glutamate + ATP = UDP-N-acetyl-alpha-D-muramoyl-L-alanyl-D-glutamate + ADP + phosphate + H(+). The protein operates within cell wall biogenesis; peptidoglycan biosynthesis. In terms of biological role, cell wall formation. Catalyzes the addition of glutamate to the nucleotide precursor UDP-N-acetylmuramoyl-L-alanine (UMA). This is UDP-N-acetylmuramoylalanine--D-glutamate ligase from Bacillus cytotoxicus (strain DSM 22905 / CIP 110041 / 391-98 / NVH 391-98).